Reading from the N-terminus, the 251-residue chain is MQPGGTAGPEEAPMREAEAGPPQVGLSRPTCSLPASSPGPALPPGCVSRPDSGLPTTSLDSAPAQLPAALVDPQLPEAKLPRPSSGLTVASPGSAPALRWHLQAPNGLRSVGSSRPSLGLPAASAGPKRPEVGLSRPSSGLPAAFAGPSRPQVGLELGLEEQQVSLSGPSSILSAASPGAKLPRVSLSRPSSSCLPLASFSPAQPSSWLSAAFPGPAFDFWRPLQAQNLPSSGPLQARPRPRPHSGLSTPS.

4 disordered regions span residues 1–93 (MQPG…ASPG), 107–152 (GLRS…SRPQ), 169–188 (PSSI…VSLS), and 224–251 (LQAQ…STPS). The segment covering 225-234 (QAQNLPSSGP) has biased composition (polar residues).

This is an uncharacterized protein from Homo sapiens (Human).